Here is a 484-residue protein sequence, read N- to C-terminus: Protein nucleotidyltransferase YdiU (484 aa).

Positions 81, 83, 84, 103, 115, 116, 166, and 173 each coordinate ATP. Asp244 functions as the Proton acceptor in the catalytic mechanism. The Mg(2+) site is built by Asn245 and Asp254. Asp254 is an ATP binding site.

This sequence belongs to the SELO family. The cofactor is Mg(2+). Mn(2+) serves as cofactor.

It catalyses the reaction L-seryl-[protein] + ATP = 3-O-(5'-adenylyl)-L-seryl-[protein] + diphosphate. The enzyme catalyses L-threonyl-[protein] + ATP = 3-O-(5'-adenylyl)-L-threonyl-[protein] + diphosphate. It carries out the reaction L-tyrosyl-[protein] + ATP = O-(5'-adenylyl)-L-tyrosyl-[protein] + diphosphate. The catalysed reaction is L-histidyl-[protein] + UTP = N(tele)-(5'-uridylyl)-L-histidyl-[protein] + diphosphate. It catalyses the reaction L-seryl-[protein] + UTP = O-(5'-uridylyl)-L-seryl-[protein] + diphosphate. The enzyme catalyses L-tyrosyl-[protein] + UTP = O-(5'-uridylyl)-L-tyrosyl-[protein] + diphosphate. Nucleotidyltransferase involved in the post-translational modification of proteins. It can catalyze the addition of adenosine monophosphate (AMP) or uridine monophosphate (UMP) to a protein, resulting in modifications known as AMPylation and UMPylation. The protein is Protein nucleotidyltransferase YdiU of Shewanella baltica (strain OS223).